The primary structure comprises 216 residues: Small ribosomal subunit protein uS3c (216 aa).

A KH type-2 domain is found at 43–118 (IKNYIQKNRR…KLNIAIVKVT (76 aa)).

It belongs to the universal ribosomal protein uS3 family. In terms of assembly, part of the 30S ribosomal subunit.

It is found in the plastid. The protein localises to the chloroplast. This Phaseolus angularis (Azuki bean) protein is Small ribosomal subunit protein uS3c (rps3).